A 374-amino-acid chain; its full sequence is tRNA (adenine(58)-N(1))-methyltransferase catalytic subunit TRM61 (374 aa).

S-adenosyl-L-methionine contacts are provided by residues 120 to 122 (SGS), glutamate 138, arginine 143, 167 to 168 (DV), and aspartate 202.

Belongs to the class I-like SAM-binding methyltransferase superfamily. TRM61 family. As to quaternary structure, heterotetramer; composed of two copies of TRM6 and two copies of TRM61.

It is found in the nucleus. The catalysed reaction is adenosine(58) in tRNA + S-adenosyl-L-methionine = N(1)-methyladenosine(58) in tRNA + S-adenosyl-L-homocysteine + H(+). Its function is as follows. Catalytic subunit of tRNA (adenine-N(1)-)-methyltransferase, which catalyzes the formation of N(1)-methyladenine at position 58 (m1A58) in initiator methionyl-tRNA. This chain is tRNA (adenine(58)-N(1))-methyltransferase catalytic subunit TRM61 (TRM61), found in Candida glabrata (strain ATCC 2001 / BCRC 20586 / JCM 3761 / NBRC 0622 / NRRL Y-65 / CBS 138) (Yeast).